Reading from the N-terminus, the 113-residue chain is UPF0482 protein YnfB (113 aa).

The signal sequence occupies residues 1–28 (MKITLSKRIGLLAFLLPCALALSTTVHA).

This sequence belongs to the UPF0482 family.

This Shigella flexneri serotype 5b (strain 8401) protein is UPF0482 protein YnfB.